The following is a 385-amino-acid chain: S-adenosylmethionine synthase (385 aa).

Histidine 15 contributes to the ATP binding site. Residue aspartate 17 participates in Mg(2+) binding. Residue glutamate 43 participates in K(+) binding. 2 residues coordinate L-methionine: glutamate 56 and glutamine 99. Residues 99–109 (QSPEIAQGVDE) form a flexible loop region. ATP is bound by residues 164–166 (DAK), 230–231 (RF), aspartate 239, 245–246 (RK), alanine 262, and lysine 266. Aspartate 239 is a binding site for L-methionine. An L-methionine-binding site is contributed by lysine 270.

This sequence belongs to the AdoMet synthase family. As to quaternary structure, homotetramer; dimer of dimers. Requires Mg(2+) as cofactor. K(+) is required as a cofactor.

It is found in the cytoplasm. The enzyme catalyses L-methionine + ATP + H2O = S-adenosyl-L-methionine + phosphate + diphosphate. The protein operates within amino-acid biosynthesis; S-adenosyl-L-methionine biosynthesis; S-adenosyl-L-methionine from L-methionine: step 1/1. In terms of biological role, catalyzes the formation of S-adenosylmethionine (AdoMet) from methionine and ATP. The overall synthetic reaction is composed of two sequential steps, AdoMet formation and the subsequent tripolyphosphate hydrolysis which occurs prior to release of AdoMet from the enzyme. The sequence is that of S-adenosylmethionine synthase from Hydrogenovibrio crunogenus (strain DSM 25203 / XCL-2) (Thiomicrospira crunogena).